We begin with the raw amino-acid sequence, 341 residues long: L-threonine 3-dehydrogenase (341 aa).

Cys38 provides a ligand contact to Zn(2+). Active-site charge relay system residues include Thr40 and His43. His63, Glu64, Cys93, Cys96, Cys99, and Cys107 together coordinate Zn(2+). Residues Ile175, Asp195, Arg200, 262–264, and 286–287 contribute to the NAD(+) site; these read LGI and IY.

Belongs to the zinc-containing alcohol dehydrogenase family. Homotetramer. Requires Zn(2+) as cofactor.

Its subcellular location is the cytoplasm. It carries out the reaction L-threonine + NAD(+) = (2S)-2-amino-3-oxobutanoate + NADH + H(+). The protein operates within amino-acid degradation; L-threonine degradation via oxydo-reductase pathway; glycine from L-threonine: step 1/2. In terms of biological role, catalyzes the NAD(+)-dependent oxidation of L-threonine to 2-amino-3-ketobutyrate. In Cronobacter sakazakii (strain ATCC BAA-894) (Enterobacter sakazakii), this protein is L-threonine 3-dehydrogenase.